Consider the following 122-residue polypeptide: Small ribosomal subunit protein uS13 (122 aa).

Residues 89–122 (GLRHRRGLPARGQRTKTNARTRKGPRRGVAGKRK) are disordered.

The protein belongs to the universal ribosomal protein uS13 family. As to quaternary structure, part of the 30S ribosomal subunit. Forms a loose heterodimer with protein S19. Forms two bridges to the 50S subunit in the 70S ribosome.

Located at the top of the head of the 30S subunit, it contacts several helices of the 16S rRNA. In the 70S ribosome it contacts the 23S rRNA (bridge B1a) and protein L5 of the 50S subunit (bridge B1b), connecting the 2 subunits; these bridges are implicated in subunit movement. Contacts the tRNAs in the A and P-sites. The polypeptide is Small ribosomal subunit protein uS13 (Oleidesulfovibrio alaskensis (strain ATCC BAA-1058 / DSM 17464 / G20) (Desulfovibrio alaskensis)).